The primary structure comprises 310 residues: MDRMCGFRSTEDYSEKATLMMPSDYQSLICSTTGDNQRLFGSDELATALSSELLPRIRKAEDNFSLSVIKSKIASHPLYPRLLQTYIDCQKVGAPMEIACILEEIQRENHVYKRDVAPLSCFGADPELDEFMETYCDILVKYKTDLARPFDEATTFINKIEMQLQNLCTGPASATALSDDGAVSSDEELREDDDIAADDSQQRSNDRDLKDQLLRKFGSHISSLKLEFSKKKKKGKLPREARQALLDWWNVHNKWPYPTEGDKISLAEETGLDQKQINNWFINQRKRHWKPSENMPFDMMDDSNETFFTE.

A disordered region spans residues S178–D208. Positions S185–A197 are enriched in acidic residues. In terms of domain architecture, ELK spans D208–F228. Positions S229–S292 form a DNA-binding region, homeobox; TALE-type.

Belongs to the TALE/KNOX homeobox family. May form heterodimeric complex with the TALE/BELL protein BEL1, BLH1 and BLH2. Interacts with OFP12 and OFP14. Interacts with BZIP30. In terms of tissue distribution, expressed predominantly in shoot apices of seedlings, in the receptacle and developing pistil of flowers and in axillary buds of inflorescence stems.

The protein localises to the nucleus. In terms of biological role, may play a role in meristem function, and may be involved in maintaining cells in an undifferentiated, meristematic state. Probably binds to the DNA sequence 5'-TGAC-3'. The chain is Homeobox protein knotted-1-like 2 (KNAT2) from Arabidopsis thaliana (Mouse-ear cress).